The following is a 329-amino-acid chain: Quinone oxidoreductase (329 aa).

A2 is subject to N-acetylalanine. K23 carries the post-translational modification N6-acetyllysine. NADP(+)-binding positions include Y53, 158–161 (SGGV), G181, H200, N229, 246–249 (VGSR), and 269–271 (VTV). S248 carries the post-translational modification Phosphoserine. K296 carries the post-translational modification N6-succinyllysine.

The protein belongs to the zinc-containing alcohol dehydrogenase family. Quinone oxidoreductase subfamily. In terms of assembly, homotetramer.

Its subcellular location is the cytoplasm. It carries out the reaction 2 a quinone + NADPH + H(+) = 2 a 1,4-benzosemiquinone + NADP(+). In terms of biological role, does not have alcohol dehydrogenase activity. Binds NADP and acts through a one-electron transfer process. Orthoquinones, such as 1,2-naphthoquinone or 9,10-phenanthrenequinone, are the best substrates (in vitro). May act in the detoxification of xenobiotics. Interacts with (AU)-rich elements (ARE) in the 3'-UTR of target mRNA species and enhances their stability. NADPH binding interferes with mRNA binding. This is Quinone oxidoreductase (CRYZ) from Pongo abelii (Sumatran orangutan).